Here is a 371-residue protein sequence, read N- to C-terminus: Cytochrome b (371 aa).

A run of 4 helical transmembrane segments spans residues 25–45, 69–90, 105–125, and 170–190; these read FGSMLLACSSMQVLTGFFLAV, WMMQNLHAIGASMFFICIYIHI, WLSGTTLLIMLMATAFFGYVL, and FFALHFILPFGIISLSSLHIM. Heme b contacts are provided by His-75 and His-89. 2 residues coordinate heme b: His-174 and His-188. A ubiquinone is bound at residue His-193. The next 4 helical transmembrane spans lie at 218 to 238, 280 to 300, 312 to 332, and 339 to 358; these read YKDLLMLSLMVLMLLMTVSFL, LGGALALAMSIMILLTIPFTH, IMQLMFWTLVATFMVITWAAT, and FTMISQIASTINFLFLIMNP.

It belongs to the cytochrome b family. The cytochrome bc1 complex contains 3 respiratory subunits (MT-CYB, CYC1 and UQCRFS1), 2 core proteins (UQCRC1 and UQCRC2) and probably 6 low-molecular weight proteins. Requires heme b as cofactor.

Its subcellular location is the mitochondrion inner membrane. In terms of biological role, component of the ubiquinol-cytochrome c reductase complex (complex III or cytochrome b-c1 complex) that is part of the mitochondrial respiratory chain. The b-c1 complex mediates electron transfer from ubiquinol to cytochrome c. Contributes to the generation of a proton gradient across the mitochondrial membrane that is then used for ATP synthesis. The polypeptide is Cytochrome b (MT-CYB) (Eryx miliaris (Desert sand boa)).